Here is a 341-residue protein sequence, read N- to C-terminus: Heat-inducible transcription repressor HrcA (341 aa).

This sequence belongs to the HrcA family.

Its function is as follows. Negative regulator of class I heat shock genes (grpE-dnaK-dnaJ and groELS operons). Prevents heat-shock induction of these operons. This is Heat-inducible transcription repressor HrcA from Brevibacillus brevis (strain 47 / JCM 6285 / NBRC 100599).